We begin with the raw amino-acid sequence, 205 residues long: Urease accessory protein UreG (205 aa).

14–21 serves as a coordination point for GTP; that stretch reads GPVGSGKT.

The protein belongs to the SIMIBI class G3E GTPase family. UreG subfamily. As to quaternary structure, homodimer. UreD, UreF and UreG form a complex that acts as a GTP-hydrolysis-dependent molecular chaperone, activating the urease apoprotein by helping to assemble the nickel containing metallocenter of UreC. The UreE protein probably delivers the nickel.

Its subcellular location is the cytoplasm. Functionally, facilitates the functional incorporation of the urease nickel metallocenter. This process requires GTP hydrolysis, probably effectuated by UreG. This is Urease accessory protein UreG from Enterobacter sp. (strain 638).